Here is a 337-residue protein sequence, read N- to C-terminus: Cysteine proteinase 3 (337 aa).

The N-terminal stretch at 1–21 (MRLSITLIFTLIVLSISFISA) is a signal peptide. Residues 22-120 (GNVFSHKQYQ…GLRLNRPQFK (99 aa)) constitute a propeptide, activation peptide. Disulfide bonds link cysteine 142–cysteine 185, cysteine 176–cysteine 219, and cysteine 277–cysteine 326. Cysteine 145 is an active-site residue. Catalysis depends on residues histidine 284 and asparagine 304.

It belongs to the peptidase C1 family.

Its subcellular location is the lysosome. The polypeptide is Cysteine proteinase 3 (cprC) (Dictyostelium discoideum (Social amoeba)).